Reading from the N-terminus, the 320-residue chain is tRNA (guanine(10)-N2)-dimethyltransferase (320 aa).

In terms of domain architecture, THUMP spans 46-136 (EKFFERLAYT…DDKCYVGLLE (91 aa)).

This sequence belongs to the methyltransferase superfamily. Trm-G10 family. In terms of assembly, monomer.

It localises to the cytoplasm. The catalysed reaction is guanosine(10) in tRNA + 2 S-adenosyl-L-methionine = N(2)-dimethylguanosine(10) in tRNA + 2 S-adenosyl-L-homocysteine + 2 H(+). Catalyzes the adenosylmethionine-dependent methylation of the exocyclic amino group (N(2)) of guanosine at position 10 of various tRNAs. Acts via a two-step process that leads to the formation of either N(2)-monomethyl (m(2)G) or N(2)-dimethylguanosine (m(2)(2)G). In Archaeoglobus fulgidus (strain ATCC 49558 / DSM 4304 / JCM 9628 / NBRC 100126 / VC-16), this protein is tRNA (guanine(10)-N2)-dimethyltransferase (trmG10).